The chain runs to 356 residues: N-methyltransferase 4 (356 aa).

S-adenosyl-L-methionine-binding positions include 93–94 (QS), 128–136 (ILDIGCGFG), and 155–160 (TNSAEQ).

Belongs to the CFA/CMAS family. Expressed in stems, roots, flower buds and leaves.

Probable N-methyltransferase not involved in benzylisoquinoline metabolism. Shows no detectable activity with (s)-coclaurine, (R)- or (S)-reticuline, papaverine or (R,S)-tetrahydropapaverine. This chain is N-methyltransferase 4 (NMT4), found in Papaver somniferum (Opium poppy).